The primary structure comprises 217 residues: Cytidylate kinase (217 aa).

9-17 (GPAGSGKTT) serves as a coordination point for ATP.

It belongs to the cytidylate kinase family. Type 1 subfamily.

The protein resides in the cytoplasm. The catalysed reaction is CMP + ATP = CDP + ADP. The enzyme catalyses dCMP + ATP = dCDP + ADP. The sequence is that of Cytidylate kinase from Thermosipho melanesiensis (strain DSM 12029 / CIP 104789 / BI429).